Here is a 466-residue protein sequence, read N- to C-terminus: Coagulation factor IX (466 aa).

The N-terminal stretch at 1-25 (MRCLNMIMAEPPGLITICLLGYLLG) is a signal peptide. The propeptide occupies 26-46 (ADCTVFLDHEDATKVLSRPKR). Ca(2+) contacts are provided by Tyr47, Asn48, Glu53, Glu54, Glu61, Glu63, Glu66, Glu67, Glu72, Glu73, and Glu76. A Gla domain is found at 47 to 92 (YNSGKLEEFVQGNLERECMEEKCSFEEAREVFENTEKTTEFWKQYV). 11 positions are modified to 4-carboxyglutamate: Glu53, Glu54, Glu61, Glu63, Glu66, Glu67, Glu72, Glu73, Glu76, Glu79, and Glu82. Glu61 provides a ligand contact to Mg(2+). Cys64 and Cys69 are joined by a disulfide. Glu66 serves as a coordination point for Mg(2+). Residue Glu72 coordinates Mg(2+). Glu76 lines the Mg(2+) pocket. Residue Glu82 coordinates Ca(2+). Glu82 lines the Mg(2+) pocket. Thr85 carries an O-linked (GalNAc...) threonine glycan. Glu86, Asp93, Gly94, and Gln96 together coordinate Ca(2+). A 4-carboxyglutamate modification is found at Glu86. Residue Glu86 participates in Mg(2+) binding. Residues 93–129 (DGDQCESNPCLNGGICKDDINSYECWCQTGFEGKNCE) form the EGF-like 1; calcium-binding domain. Intrachain disulfides connect Cys97–Cys108, Cys102–Cys117, Cys119–Cys128, Cys134–Cys145, Cys141–Cys155, Cys157–Cys170, Cys178–Cys340, Cys257–Cys273, Cys387–Cys401, and Cys412–Cys440. A glycan (O-linked (Glc...) serine) is linked at Ser99. Ca(2+) is bound by residues Asp110 and Asp111. (3R)-3-hydroxyaspartate is present on Asp110. Ser114 is subject to Phosphoserine. The region spanning 130-171 (LDVTCNIKNGRCKQFCKLDADNKVVCSCTTGYQLAEDQKSCE) is the EGF-like 2 domain. Residues 193-231 (AETLFLNMDYENSTTDYENSAEAEKNVDNVTQPLNDLTR) constitute a propeptide, activation peptide. Tyr202 is subject to Sulfotyrosine. Position 205 is a phosphoserine (Ser205). A Phosphothreonine; alternate modification is found at Thr206. The O-linked (GalNAc...) threonine; alternate glycan is linked to Thr206. N-linked (GlcNAc...) asparagine glycosylation occurs at Asn221. 2 O-linked (GalNAc...) threonine glycosylation sites follow: Thr223 and Thr230. In terms of domain architecture, Peptidase S1 spans 232–464 (IVGGKTAKPG…YVNWIKEKTK (233 aa)). The active-site Charge relay system is His272. The Ca(2+) site is built by Glu286, Asn288, Glu291, Glu293, and Glu296. Asp320 serves as the catalytic Charge relay system. The active-site Charge relay system is the Ser416.

This sequence belongs to the peptidase S1 family. Heterodimer of a light chain and a heavy chain; disulfide-linked. Interacts (inactive and activated) with F11 (activated) in calcium-dependent manner. Interacts with SERPINC1. In terms of processing, the iron and 2-oxoglutarate dependent 3-hydroxylation of aspartate and asparagine is (R) stereospecific within EGF domains. Post-translationally, activated by factor XIa, which excises the activation peptide. The propeptide can also be removed by snake venom protease. Activated by coagulation factor VIIa-tissue factor (F7-F3) complex in calcium-dependent manner. Predominantly O-glucosylated at Ser-99 by POGLUT1 in vitro.

The protein localises to the secreted. The enzyme catalyses Selective cleavage of Arg-|-Ile bond in factor X to form factor Xa.. Its function is as follows. Factor IX is a vitamin K-dependent plasma protein that participates in the intrinsic pathway of blood coagulation by converting factor X to its active form in the presence of Ca(2+) ions, phospholipids, and factor VIIIa. The sequence is that of Coagulation factor IX (F9) from Felis catus (Cat).